The following is a 402-amino-acid chain: Multidrug resistance protein MdtH (402 aa).

The next 11 membrane-spanning stretches (helical) occupy residues 13–33 (YFLL…FPLI), 34–54 (SIRF…ALGL), 99–116 (PWVL…GTLF), 139–159 (LLMM…SWLL), 165–185 (LVCG…AWLL), 214–234 (VLTL…LPVM), 243–263 (AAVK…LYPL), 277–297 (LMAG…ASNL), 300–320 (LFTL…ARET), 340–360 (LGLA…FDAG), and 368–388 (LPWA…WWQF).

Belongs to the major facilitator superfamily. DHA1 family. MdtH (TC 2.A.1.2.21) subfamily.

Its subcellular location is the cell inner membrane. This chain is Multidrug resistance protein MdtH, found in Cronobacter sakazakii (strain ATCC BAA-894) (Enterobacter sakazakii).